Here is a 139-residue protein sequence, read N- to C-terminus: Acidic phospholipase A2 4 (139 aa).

The first 16 residues, 1 to 16, serve as a signal peptide directing secretion; it reads MRTLWIVAVWLVGVEG. 7 cysteine pairs are disulfide-bonded: cysteine 42/cysteine 131, cysteine 44/cysteine 60, cysteine 59/cysteine 111, cysteine 65/cysteine 139, cysteine 66/cysteine 104, cysteine 73/cysteine 97, and cysteine 91/cysteine 102. Tyrosine 43, glycine 45, and glycine 47 together coordinate Ca(2+). Histidine 63 is a catalytic residue. Aspartate 64 contacts Ca(2+). Aspartate 105 is an active-site residue.

The protein belongs to the phospholipase A2 family. Group II subfamily. D49 sub-subfamily. Requires Ca(2+) as cofactor. In terms of tissue distribution, expressed by the venom gland.

The protein localises to the secreted. It catalyses the reaction a 1,2-diacyl-sn-glycero-3-phosphocholine + H2O = a 1-acyl-sn-glycero-3-phosphocholine + a fatty acid + H(+). PLA2 catalyzes the calcium-dependent hydrolysis of the 2-acyl groups in 3-sn-phosphoglycerides. The protein is Acidic phospholipase A2 4 of Echis carinatus sochureki (Saw-scaled viper).